A 1149-amino-acid polypeptide reads, in one-letter code: MSDCWCFIFCKEHVRSNPLSPQHDGASREEADHQVDVSDGIRLVPDKAEATAATASDEIMHQDIVPLCAADIQEQLKKRFAYLSGGRGQDGSPVITFPDYPAFSEIPDKEFQNVMTYLTSIPSLQDAGIGFILVIDRRQDKWTSVKASVLRIAASFPANLQLVLVLRPTGFFQRTLSDIAFKFNRDEFKMKVPVMMLSSVPELHGYIDKSQLTEDLGGTLDYCHSRWLCHRTAIESFALMVKQTAQMLQAFGTELAETELPNDVQSTSLVLSAHTEKKAKVKEDLQLALKEGNSILESLREPLAESAAHSVNQDQLDNQATVQRLLAQLNETEAAFDEFWAKHQQKLEQCLQLRHFEQGFREVKTTLDSMSQKIAAFTDVGNSLAHVQHLLKDLTAFEEKSSVAVDKARALSLEGQQLIENRHYAVDSIHPKCEELQHLCDHFASEVTRRRGLLSKSLELHSLLETSMKWSDEGIFLLASQPVDKCQSQDGAEAALQEIEKFLETGAENKIQELNEIYKEYECILNQDLLEHVQKVFQKQESTEEMFHRRQASLKKLAAKQTRPVQPVAPRPEALTKSPSPSPGSWRSSENSSSEGNALRRGPYRRAKSEMSEPRQGRTSSTGEEEESLAILRRHVMNELLDTERAYVEELLCVLEGYAAEMDNPLMAHLISTGLQNKKNILFGNMEEIYHFHNRNIPAGLESCIDCPELVGRCFLERMEEFQIYEKYCQNKPRSESLWRQCSDCPFFQECQKKLDHKLSLDSYLLKPVQRITKYQLLLKEMLKYSKHCEGAEDLQEALSSILGILKAVNDSMHLIAITGYDGNLGDLGKLLMQGSFSVWTDHKKGHTKVKELARFKPMQRHLFLHEKAVLFCKKREENGEGYEKAPSYSYKQSLNMTAVGITENVKGDTKKFEIWYNAREEVYIIQAPTPEIKAAWVNEIRKVLTSQLQACREASQHRALEQSHSLPLPTPSSTSPTKGNTRNVKKLEDRKTDPLSLEGYVSSSLPKPPEKGKGWSKTSHSLEAPEEDGGWSSAEELINSSDAEEDGGVGPKKLVPGKYTVVMDDEKGGPDTLAMRSGDMVEVVEEGAEGLWYVRDLTSSKEGWVPASSLSTLLGKSSSAQCLSSSGKIHCARQLCPEPAEILSPEPV.

One can recognise a CRAL-TRIO domain in the interval 52–224 (AATASDEIMH…DLGGTLDYCH (173 aa)). One copy of the Spectrin repeat lies at 351-456 (LQLRHFEQGF…VTRRRGLLSK (106 aa)). Phosphoserine occurs at positions 457, 462, 471, and 480. Residues 503 to 529 (LETGAENKIQELNEIYKEYECILNQDL) adopt a coiled-coil conformation. The tract at residues 555-627 (KKLAAKQTRP…RTSSTGEEEE (73 aa)) is disordered. The segment covering 583–594 (PGSWRSSENSSS) has biased composition (low complexity). Positions 607-616 (AKSEMSEPRQ) are enriched in basic and acidic residues. Residue Ser621 is modified to Phosphoserine. Residue Thr622 is modified to Phosphothreonine. Residues 632–812 (LRRHVMNELL…LGILKAVNDS (181 aa)) enclose the DH domain. The 110-residue stretch at 841–950 (TDHKKGHTKV…IRKVLTSQLQ (110 aa)) folds into the PH domain. The disordered stretch occupies residues 956–1033 (SQHRALEQSH…EAPEEDGGWS (78 aa)). Over residues 966-978 (SLPLPTPSSTSPT) the composition is skewed to low complexity. Residues Ser1033, Ser1034, Ser1041, and Ser1042 each carry the phosphoserine modification. The region spanning 1055–1116 (LVPGKYTVVM…PASSLSTLLG (62 aa)) is the SH3 domain.

This sequence belongs to the MCF2 family. As to quaternary structure, interacts with GTP-bound RAC1. Interacts with CDC42. Interacts with RHOA. Interacts with CCPG1, which results in specific inhibition of its exchange activity toward RHOA, but does not affect its activity on CDC42. Expressed at low levels in several hemopoietic cell lines and in thymus and spleen, and at higher levels in other tissues, particularly in brain.

The protein resides in the cytoplasm. Its subcellular location is the cell membrane. Its function is as follows. Guanine nucleotide exchange factor that catalyzes guanine nucleotide exchange on RHOA and CDC42, and thereby contributes to the regulation of RHOA and CDC42 signaling pathways. Seems to lack activity with RAC1. Becomes activated and highly tumorigenic by truncation of the N-terminus. The sequence is that of Guanine nucleotide exchange factor DBS (Mcf2l) from Mus musculus (Mouse).